Here is a 369-residue protein sequence, read N- to C-terminus: MVYANNNIDPNAPCYVSECAELLSDKVGGVVLGCTDQWFAECVNLIKHSAPVWDAEKYVDTGKWMDGWETKRHNPDHDWCIIKLGIPGVIYGFEIDTAYFTGNYPPHASIEALCDDSDPNFNTLKESNNWEVILNKSDLGSSCKKYFECKVEKRFTHIKFRIYPDGGVARLRAYGRVVKDWTLVIPGELVDLAAIENGGLVTQVSDHFYGNKNNIIMPGRSVNMGDGWETKRRRGPGNDWLTVKLAKEGIVKRIEVDTNWFKGNFPTSCSIDAIHSSSAPDETHLQDYEWTNILPNSPLCGHRRHFFQNELVNNDKPFTHIRLNIFPDGGVSRLRINCSLPDSKNNNNNNNNNNNNNTSNSFKTSDRQQ.

Residues Pro341–Gln369 are disordered. The segment covering Asn345–Asn357 has biased composition (low complexity).

It belongs to the allantoicase family.

The catalysed reaction is allantoate + H2O = (S)-ureidoglycolate + urea. It functions in the pathway nitrogen metabolism; (S)-allantoin degradation; (S)-ureidoglycolate from allantoate (aminidohydrolase route): step 1/1. In terms of biological role, utilization of purines as secondary nitrogen sources, when primary sources are limiting. The protein is Allantoicase (allC) of Dictyostelium discoideum (Social amoeba).